Consider the following 848-residue polypeptide: Transforming growth factor beta receptor type 3 (848 aa).

The N-terminal stretch at Met1–Ala20 is a signal peptide. Residues Gly21–Val784 lie on the Extracellular side of the membrane. 2 N-linked (GlcNAc...) asparagine glycosylation sites follow: Asn34 and Asn141. Cys52 and Cys197 are oxidised to a cystine. The disordered stretch occupies residues Ser390–Asp448. Basic and acidic residues predominate over residues Gly411–Asp425. In terms of domain architecture, ZP spans Arg454–Cys729. A glycan (N-linked (GlcNAc...) asparagine) is linked at Asn491. O-linked (Xyl...) (glycosaminoglycan) serine glycans are attached at residues Ser529, Ser533, and Ser544. N-linked (GlcNAc...) asparagine glycosylation is found at Asn570, Asn589, and Asn696. Intrachain disulfides connect Cys638–Cys704, Cys659–Cys729, and Cys709–Cys722. An interaction with TGF-beta ligand region spans residues Met736–Pro750. The chain crosses the membrane as a helical span at residues Met785 to Tyr806. Over Ser807 to Ala848 the chain is Cytoplasmic. The segment at Ala813 to Ala848 is disordered. Over residues Ser833–Ala848 the composition is skewed to low complexity. Thr837 is subject to Phosphothreonine.

Forms homodimers and homooligomers. Interacts with DYNLT4. Interacts with integrin ITGA5:ITGB1; this interaction promotes the internalization and trafficking of ITGA5:ITGB1 into endocytic vesicles. Interacts with TGFB1, BMP2, BMP5, BMP7 or GDF5 and inhibin A via the ligand binding domains. Interacts with ALK3/BMPR1A; this interaction results in the cell surface retention of BMPR1A. Interacts with ALK6/BMPR1B; this interaction enhances BMPR1B-mediated stimulation of the BMP signaling pathway. Interacts with the scaffolding protein beta-arrestin2/ARRB2; this interaction mediates internalization of TGFBR3 and thus regulates migration, actin cytoskeleton and activation of CDC42. Post-translationally, extensively modified by glycosaminoglycan groups (GAG). In terms of processing, phosphorylated in the cytoplasmic domain by the type II receptor TGFBR2 at THR-837 to mediate recruitment of ARRB2 and subsequent internalization of TGFBR2 and TGFBR3.

It is found in the cell membrane. The protein localises to the secreted. Its subcellular location is the extracellular space. It localises to the extracellular matrix. Cell surface receptor that regulates diverse cellular processes including cell proliferation, differentiation, migration, and apoptosis. Initiates BMP, inhibin, and TGF-beta signaling pathways by interacting with different ligands including TGFB1, BMP2, BMP5, BMP7 or GDF5. Alternatively, acts as a cell surface coreceptor for BMP ligands, serving to enhance ligand binding by differentially regulating BMPR1A/ALK3 and BMPR1B/ALK6 receptor trafficking. Promotes epithelial cell adhesion, focal adhesion formation and integrin signaling during epithelial cell spreading on fibronectin. By interacting with the scaffolding protein beta-arrestin2/ARRB2, regulates migration or actin cytoskeleton and promotes the activation of CDC42 as well as the inhibition of NF-kappa-B. In gonadotrope cells, acts as an inhibin A coreceptor and regulates follicle-stimulating hormone (FSH) levels and female fertility. Plays a role in the inhibition of directed and random cell migration in epithelial cells by altering the actin cytoskeletal organization. Participates in epithelial-mesenchymal transformation (EMT) upon binding to BMP2 or TGFB2, by activating the PAR6/SMURF1/RHOA pathway. This Sus scrofa (Pig) protein is Transforming growth factor beta receptor type 3 (TGFBR3).